We begin with the raw amino-acid sequence, 508 residues long: MGLPWYRVHTVVLNDPGRLLSVHIMHTALVAGWAGSMALYELAVFDPSDPVLDPMWRQGMFVIPFMTRLGITNSWGGWSITGGTTTNPGIWSYEGVAGAHIMFSGLCFLAAIWHWVYWDLEIFCDERTGKPSLDLPKIFGIHLFLAGVACFGFGAFHVTGLYGPGIWVSDPYGLTGKVQSVNPSWGVEGFDPFVPGGIASHHIAAGTLGILAGLFHLSVRPPQRLYKGLRMGNIETVLSSSIAAVFFAAFVVAGTMWYGSATTPIELFGPTRYQWDQGYFQQEIYRRVSAGLAENQSLSEVWSKIPEKLAFYDYIGNNPAKGGLFRAGSMDNGDGIAVGWLGHPIFRDKEGRELFVRRMPTFFETFPVVLVDGDGIVRADVPFRRAESKYSVEQVGVTVEFYGGELNGVSYSDPVTVKKYARRAQLGEIFELDRATLKSDGVFRSSPRGWFTFGHASFALLFFFGHIWHGARTLFRDVFAGIDPDLDAQVEFGAFQKLGDPTTRRQAV.

6 consecutive transmembrane segments (helical) span residues S21–S36, I101–W115, G140–F156, I203–S218, V237–V252, and S457–R472.

It belongs to the PsbB/PsbC family. PsbB subfamily. In terms of assembly, PSII is composed of 1 copy each of membrane proteins PsbA, PsbB, PsbC, PsbD, PsbE, PsbF, PsbH, PsbI, PsbJ, PsbK, PsbL, PsbM, PsbT, PsbX, PsbY, PsbZ, Psb30/Ycf12, at least 3 peripheral proteins of the oxygen-evolving complex and a large number of cofactors. It forms dimeric complexes. Binds multiple chlorophylls. PSII binds additional chlorophylls, carotenoids and specific lipids. serves as cofactor.

Its subcellular location is the plastid. The protein localises to the chloroplast thylakoid membrane. One of the components of the core complex of photosystem II (PSII). It binds chlorophyll and helps catalyze the primary light-induced photochemical processes of PSII. PSII is a light-driven water:plastoquinone oxidoreductase, using light energy to abstract electrons from H(2)O, generating O(2) and a proton gradient subsequently used for ATP formation. The chain is Photosystem II CP47 reaction center protein from Guizotia abyssinica (Niger).